A 358-amino-acid polypeptide reads, in one-letter code: MIAISPDRLAAIIARREELQAEMARPDLDSNRLVALSREYSEVEPVALAAENVGRLREEGETLEAMTKDDDPELQAMAVEELEANKTALAEAERALALSLLPRDAADERSAILEIRAGTGGDEAALFGGDLLRMYSRYAEEHGWRVEMISASAAELGGYKEVVISITGAGVFARLKFESGVHRVQRVPVTESGGRIHTSAATVAVLPEAEEVDVDIDERDLRIDIFRSSGPGGQSVNTTDSAVRITHIPSGIVVSQQDEKSQHKNKAKAMKVLRARLYERERERLHSERAGQRKSMVGSGDRSERIRTYNFPQGRVTDHRINLTLHRLPEILAGPGLDEVISALIAEDEAERLASLDD.

Q234 is subject to N5-methylglutamine. A disordered region spans residues 283 to 306 (ERLHSERAGQRKSMVGSGDRSERI).

The protein belongs to the prokaryotic/mitochondrial release factor family. In terms of processing, methylated by PrmC. Methylation increases the termination efficiency of RF1.

It is found in the cytoplasm. Peptide chain release factor 1 directs the termination of translation in response to the peptide chain termination codons UAG and UAA. The polypeptide is Peptide chain release factor 1 (Zymomonas mobilis subsp. mobilis (strain ATCC 31821 / ZM4 / CP4)).